The following is an 895-amino-acid chain: Probable LRR receptor-like serine/threonine-protein kinase At5g48740 (895 aa).

Positions 1–16 are cleaved as a signal peptide; sequence MLFWVLLSSFCVFCFS. The Extracellular segment spans residues 17–544; that stretch reads SPDGFLSLSC…INKKQRKQNR (528 aa). Asparagine 36, asparagine 50, asparagine 60, asparagine 140, asparagine 195, asparagine 234, and asparagine 318 each carry an N-linked (GlcNAc...) asparagine glycan. LRR repeat units follow at residues 385–407, 408–430, 431–453, 454–477, 478–500, and 511–532; these read RVTSLFLSKINLRSISPTFGDLL, DLKTLDLHNTSLTGAIQNVGSLK, DLQKLNLSFNQLESFGSELEDLV, NLEVLDLQNNSLQGSVPETLGKLK, KLRLLNLENNNLVGPLPQSLNIT, and CLSFSSISCNNVSSTIDTPQVT. N-linked (GlcNAc...) asparagine glycans are attached at residues asparagine 416, asparagine 436, asparagine 462, asparagine 498, and asparagine 521. Residues 545–565 traverse the membrane as a helical segment; sequence IAILLGVSGGALFATFLVFVF. Residues 566 to 895 are Cytoplasmic-facing; it reads MSIFTRRQRN…SYLAASAHTD (330 aa). The Protein kinase domain occupies 606–888; it reads RNFKEVIGRG…EAYSLQLSYL (283 aa). Residues 612-620 and lysine 634 contribute to the ATP site; that span reads IGRGSFGAV. Tyrosine 679 bears the Phosphotyrosine mark. Aspartate 732 functions as the Proton acceptor in the catalytic mechanism. Serine 736 bears the Phosphoserine mark. A phosphothreonine mark is found at threonine 767 and threonine 772. Position 780 is a phosphotyrosine (tyrosine 780).

It belongs to the protein kinase superfamily. Ser/Thr protein kinase family.

It is found in the membrane. The catalysed reaction is L-seryl-[protein] + ATP = O-phospho-L-seryl-[protein] + ADP + H(+). It carries out the reaction L-threonyl-[protein] + ATP = O-phospho-L-threonyl-[protein] + ADP + H(+). The sequence is that of Probable LRR receptor-like serine/threonine-protein kinase At5g48740 from Arabidopsis thaliana (Mouse-ear cress).